We begin with the raw amino-acid sequence, 1044 residues long: Probable pre-mRNA-splicing factor ATP-dependent RNA helicase DEAH6 (1044 aa).

2 disordered regions span residues 99-134 and 152-211; these read EADHDEDENNVKKQSASKTGKSDKGQKRFRKKSEQL and RRKV…VRRD. Acidic residues predominate over residues 157 to 167; the sequence is EDEDDGTESEE. Over residues 168-211 the composition is skewed to basic and acidic residues; the sequence is ERLRDQREREELEQHLRERDTARTRKLTEPKMSKKEQEEFVRRD. Positions 414-577 constitute a Helicase ATP-binding domain; that stretch reads LNAVKDHQVL…FDQAPIFRFP (164 aa). Residue 427-434 participates in ATP binding; the sequence is GETGSGKT. The DEAH box motif lies at 524–527; it reads DEAH. One can recognise a Helicase C-terminal domain in the interval 599-775; it reads AITTVLTIHV…SVVLSLKSLG (177 aa).

It belongs to the DEAD box helicase family. DEAH subfamily. PRP2 sub-subfamily. As to expression, predominantly expressed in flowers.

It carries out the reaction ATP + H2O = ADP + phosphate + H(+). Its function is as follows. May be involved in pre-mRNA splicing. The chain is Probable pre-mRNA-splicing factor ATP-dependent RNA helicase DEAH6 from Arabidopsis thaliana (Mouse-ear cress).